A 132-amino-acid chain; its full sequence is MAFQTQGSNLRALLVEDIKVNRMILSQMLRKFQVETTVVQNGKEAVELFLGGETFDIVLTDNLMPIMTGPEAISKIRAMGATDVMIVGVSVDANSMEEFKDAGADLCVPKLKLEILEHILQETRSKKNKSSA.

A Response regulatory domain is found at 11–125 (RALLVEDIKV…LEHILQETRS (115 aa)). D61 is modified (4-aspartylphosphate).

Belongs to the ARR family. Type-C subfamily. Two-component system major event consists of a His-to-Asp phosphorelay between a sensor histidine kinase (HK) and a response regulator (RR). In plants, the His-to-Asp phosphorelay involves an additional intermediate named Histidine-containing phosphotransfer protein (HPt). This multistep phosphorelay consists of a His-Asp-His-Asp sequential transfer of a phosphate group between first a His and an Asp of the HK protein, followed by the transfer to a conserved His of the HPt protein and finally the transfer to an Asp in the receiver domain of the RR protein.

Functionally, functions as a response regulator involved in His-to-Asp phosphorelay signal transduction system. Phosphorylation of the Asp residue in the receiver domain activates the ability of the protein to promote the transcription of target genes. May directly activate some type-A response regulators in response to cytokinins. This Oryza sativa subsp. japonica (Rice) protein is Two-component response regulator ORR42.